A 249-amino-acid chain; its full sequence is Triosephosphate isomerase (249 aa).

The substrate site is built by N12 and K14. N6-acetyllysine is present on K14. Residue N16 is modified to Deamidated asparagine. Position 68 is a 3'-nitrotyrosine (Y68). Deamidated asparagine is present on N72. S80 bears the Phosphoserine mark. H96 acts as the Electrophile in catalysis. S106 bears the Phosphoserine mark. K142 is covalently cross-linked (Glycyl lysine isopeptide (Lys-Gly) (interchain with G-Cter in SUMO1)). Position 149 is an N6-succinyllysine (K149). N6-acetyllysine; alternate is present on K156. K156 carries the N6-succinyllysine; alternate modification. S159 carries the post-translational modification Phosphoserine. Residue E166 is the Proton acceptor of the active site. T173 carries the post-translational modification Phosphothreonine. At K194 the chain carries N6-acetyllysine; alternate. K194 is modified (N6-succinyllysine; alternate). K194 carries the post-translational modification N6-methyllysine; alternate. S198 is subject to Phosphoserine. 3'-nitrotyrosine is present on Y209. Phosphoserine is present on S212. T214 is subject to Phosphothreonine. S223 is modified (phosphoserine). Residue K238 is modified to N6-acetyllysine.

This sequence belongs to the triosephosphate isomerase family. In terms of assembly, homodimer. In terms of processing, asn-16 and Asn-72 undergo deamidation which gives rise to four extra negative charges. These are expected to decrease subunit-subunit interactions and so expose the hydrophobic interface to the aqueous environment.

The protein resides in the cytoplasm. The enzyme catalyses D-glyceraldehyde 3-phosphate = dihydroxyacetone phosphate. It carries out the reaction dihydroxyacetone phosphate = methylglyoxal + phosphate. It participates in carbohydrate degradation; glycolysis; D-glyceraldehyde 3-phosphate from glycerone phosphate: step 1/1. The protein operates within carbohydrate biosynthesis; gluconeogenesis. Its function is as follows. Triosephosphate isomerase is an extremely efficient metabolic enzyme that catalyzes the interconversion between dihydroxyacetone phosphate (DHAP) and D-glyceraldehyde-3-phosphate (G3P) in glycolysis and gluconeogenesis. Functionally, it is also responsible for the non-negligible production of methylglyoxal a reactive cytotoxic side-product that modifies and can alter proteins, DNA and lipids. The chain is Triosephosphate isomerase (TPI1) from Oryctolagus cuniculus (Rabbit).